The primary structure comprises 198 residues: uncharacterized protein (198 aa).

Positions 51-74 are disordered; the sequence is EEPDNGDDRGSRRTTGQGRKWAAH.

This is an uncharacterized protein from Homo sapiens (Human).